A 730-amino-acid chain; its full sequence is Hemolytic phospholipase C (730 aa).

The segment at residues 1 to 38 (MTENWKFRRRTFLKHGAQAATLAGLSGLFPETLRRALA) is a signal peptide (tat-type signal).

It belongs to the bacterial phospholipase C family. In terms of processing, predicted to be exported by the Tat system. The position of the signal peptide cleavage has not been experimentally proven.

The catalysed reaction is a 1,2-diacyl-sn-glycero-3-phosphocholine + H2O = phosphocholine + a 1,2-diacyl-sn-glycerol + H(+). Hydrolyzes sphingomyelin in addition to phosphatidylcholine. The protein is Hemolytic phospholipase C (plcH) of Pseudomonas aeruginosa (strain ATCC 15692 / DSM 22644 / CIP 104116 / JCM 14847 / LMG 12228 / 1C / PRS 101 / PAO1).